The sequence spans 684 residues: Frizzled-8 (684 aa).

The first 27 residues, 1–27 (MEWGYLLEVTSLLAALAVLQRSSGAAA), serve as a signal peptide directing secretion. Residues 28 to 271 (ASAKELACQE…NPFFSQDERA (244 aa)) lie on the Extracellular side of the membrane. Residues 30–151 (AKELACQEIT…GNPDTLCMDY (122 aa)) enclose the FZ domain. 5 disulfide bridges follow: cysteine 35–cysteine 96, cysteine 43–cysteine 89, cysteine 80–cysteine 118, cysteine 107–cysteine 148, and cysteine 111–cysteine 135. Asparagine 49 carries an N-linked (GlcNAc...) asparagine glycan. 71-78 (QFWPLVEI) lines the hexadecanoate pocket. The interval 95–100 (ICLEDY) is wnt-binding. The segment at 147–152 (LCMDYN) is wnt-binding. Asparagine 152 is a glycosylation site (N-linked (GlcNAc...) asparagine). Residues 155-222 (DLTTAAPSPP…KARPPGGGAA (68 aa)) form a disordered region. Pro residues predominate over residues 161 to 175 (PSPPRRLPPPQPGEQ). Composition is skewed to low complexity over residues 176-186 (PPSGSGHSRPP) and 199-222 (GSGDTAAAPPSRGGKARPPGGGAA). The helical transmembrane segment at 272–292 (FTVFWIGLWSVLCFVSTFATV) threads the bilayer. Topologically, residues 293–308 (STFLIDMERFKYPERP) are cytoplasmic. The chain crosses the membrane as a helical span at residues 309–329 (IIFLSACYLFVSVGYLVRLVA). At 330 to 393 (GHEKVACSGG…RYETTGPALC (64 aa)) the chain is on the extracellular side. A helical transmembrane segment spans residues 394 to 414 (TVVFLLVYFFGMASSIWWVIL). Over 415-436 (SLTWFLAAGMKWGNEAIAGYSQ) the chain is Cytoplasmic. Residues 437 to 457 (YFHLAAWLVPSVKSIAVLALS) traverse the membrane as a helical segment. The Extracellular segment spans residues 458–480 (SVDGDPVAGICYVGNQSLDNLRG). An N-linked (GlcNAc...) asparagine glycan is attached at asparagine 472. The chain crosses the membrane as a helical span at residues 481 to 501 (FVLAPLVIYLFIGTMFLLAGF). The Cytoplasmic segment spans residues 502–529 (VSLFRIRSVIKQQGGPTKTHKLEKLMIR). The helical transmembrane segment at 530 to 550 (LGLFTVLYTVPAAVVVACLFY) threads the bilayer. Over 551-581 (EQHNRPRWEATHNCPCLRDLQPDQARRPDYA) the chain is Extracellular. Residues 582 to 602 (VFMLKYFMCLVVGITSGVWVW) form a helical membrane-spanning segment. Residues 603–684 (SGKTLESWRA…YPKQMPLSQV (82 aa)) are Cytoplasmic-facing. The Lys-Thr-X-X-X-Trp motif, mediates interaction with the PDZ domain of Dvl family members signature appears at 605-610 (KTLESW). Gly residues predominate over residues 630–654 (AGGSGPGGGGPGPGGGGGHGGGGGS). The segment at 630 to 655 (AGGSGPGGGGPGPGGGGGHGGGGGSL) is disordered. Positions 682–684 (SQV) match the PDZ-binding motif.

It belongs to the G-protein coupled receptor Fz/Smo family. Component of a Wnt-signaling complex that contains a WNT protein, a FZD protein and LRP5 or LRP6. Interacts directly with LRP5 or LRP6; the interaction is promoted by Wnt-binding and signaling and inhibited by DKK1. Interacts (via the PDZ-binding motif) with GPOC (via its PDZ domain). Interacts with RSPO1 and RSPO3. Interacts with glypican GPC3. In terms of processing, ubiquitinated by ZNRF3, leading to its degradation by the proteasome.

It localises to the membrane. Its subcellular location is the golgi apparatus. The protein resides in the cell membrane. Receptor for Wnt proteins. Component of the Wnt-Fzd-LRP5-LRP6 complex that triggers beta-catenin signaling through inducing aggregation of receptor-ligand complexes into ribosome-sized signalosomes. The beta-catenin canonical signaling pathway leads to the activation of disheveled proteins, inhibition of GSK-3 kinase, nuclear accumulation of beta-catenin and activation of Wnt target genes. A second signaling pathway involving PKC and calcium fluxes has been seen for some family members, but it is not yet clear if it represents a distinct pathway or if it can be integrated in the canonical pathway, as PKC seems to be required for Wnt-mediated inactivation of GSK-3 kinase. Both pathways seem to involve interactions with G-proteins. May be involved in transduction and intercellular transmission of polarity information during tissue morphogenesis and/or in differentiated tissues. Coreceptor along with RYK of Wnt proteins, such as WNT1. The chain is Frizzled-8 (Fzd8) from Rattus norvegicus (Rat).